The chain runs to 103 residues: Small ribosomal subunit protein uS14c (103 aa).

This sequence belongs to the universal ribosomal protein uS14 family. Part of the 30S ribosomal subunit.

It localises to the plastid. The protein localises to the chloroplast. Its function is as follows. Binds 16S rRNA, required for the assembly of 30S particles. This Lolium perenne (Perennial ryegrass) protein is Small ribosomal subunit protein uS14c.